We begin with the raw amino-acid sequence, 99 residues long: Nucleoid-associated protein EbfC (99 aa).

It belongs to the YbaB/EbfC family. As to quaternary structure, homodimer.

Its subcellular location is the cytoplasm. It localises to the nucleoid. Functionally, binds to DNA and alters its conformation. May be involved in regulation of gene expression, nucleoid organization and DNA protection. The chain is Nucleoid-associated protein EbfC from Borreliella afzelii (strain PKo) (Borrelia afzelii).